Consider the following 400-residue polypeptide: Multidrug resistance protein 2 (400 aa).

The next 11 helical transmembrane spans lie at 11 to 31 (IFII…LIIP), 46 to 66 (TMGY…PFAG), 78 to 98 (IILG…GTHV), 106 to 126 (ILGG…VADI), 142 to 162 (AIST…GFGI), 164 to 184 (MPFF…VFIL), 213 to 233 (IHPV…GLSA), 253 to 273 (IAAI…LLFG), 297 to 317 (FVST…FIFL), 346 to 366 (STYT…LFDL), and 368 to 388 (IHYP…LTMV).

This sequence belongs to the major facilitator superfamily. TCR/Tet family.

The protein resides in the cell membrane. Functionally, energy-dependent efflux pump responsible for decreased drug accumulation in multi-drug-resistant cells. Probably uses a transmembrane proton gradient as the energy source. Causes the efflux of a variety of toxic substances, including such structurally diverse compounds as ethidium bromide, rhodamine and acridine dyes, tetraphenylphosphonium, puromycin, chloramphenicol, doxorubicin, and fluoroquinolone antibiotics. In Bacillus subtilis (strain 168), this protein is Multidrug resistance protein 2 (blt).